Reading from the N-terminus, the 588-residue chain is 2-isopropylmalate synthase (588 aa).

The Pyruvate carboxyltransferase domain occupies 40–314 (PRWCAVDLRD…DPQIDFSDLD (275 aa)). Mg(2+) is bound by residues aspartate 49, histidine 253, histidine 255, and asparagine 289. The tract at residues 456–588 (APLDRVEEKW…TVREPELAAV (133 aa)) is regulatory domain.

The protein belongs to the alpha-IPM synthase/homocitrate synthase family. LeuA type 2 subfamily. Homodimer. Mg(2+) is required as a cofactor.

The protein resides in the cytoplasm. It catalyses the reaction 3-methyl-2-oxobutanoate + acetyl-CoA + H2O = (2S)-2-isopropylmalate + CoA + H(+). The protein operates within amino-acid biosynthesis; L-leucine biosynthesis; L-leucine from 3-methyl-2-oxobutanoate: step 1/4. In terms of biological role, catalyzes the condensation of the acetyl group of acetyl-CoA with 3-methyl-2-oxobutanoate (2-ketoisovalerate) to form 3-carboxy-3-hydroxy-4-methylpentanoate (2-isopropylmalate). This chain is 2-isopropylmalate synthase, found in Clavibacter sepedonicus (Clavibacter michiganensis subsp. sepedonicus).